The following is an 810-amino-acid chain: Cation/H(+) antiporter 18 (810 aa).

12 helical membrane-spanning segments follow: residues F29–A49, R59–G76, L91–L111, L126–V146, S157–A177, L193–I213, L223–I243, F277–I297, L314–A334, G343–V363, A374–I394, and F406–A426. The residue at position 804 (S804) is a Phosphoserine.

It belongs to the monovalent cation:proton antiporter 2 (CPA2) transporter (TC 2.A.37) family. CHX (TC 2.A.37.4) subfamily. Expressed in roots.

It localises to the membrane. In terms of biological role, may operate as a cation/H(+) antiporter. This is Cation/H(+) antiporter 18 (CHX18) from Arabidopsis thaliana (Mouse-ear cress).